Consider the following 299-residue polypeptide: Tyrosine recombinase XerC (299 aa).

Positions 1 to 85 constitute a Core-binding (CB) domain; that stretch reads MQADLDAFLD…ALRGFYRYLL (85 aa). Residues 106–285 enclose the Tyr recombinase domain; sequence RLPRTLDADR…DFQHLAAVYD (180 aa). Catalysis depends on residues Arg146, Lys170, His237, Arg240, and His263. Residue Tyr272 is the O-(3'-phospho-DNA)-tyrosine intermediate of the active site.

Belongs to the 'phage' integrase family. XerC subfamily. As to quaternary structure, forms a cyclic heterotetrameric complex composed of two molecules of XerC and two molecules of XerD.

It localises to the cytoplasm. Functionally, site-specific tyrosine recombinase, which acts by catalyzing the cutting and rejoining of the recombining DNA molecules. The XerC-XerD complex is essential to convert dimers of the bacterial chromosome into monomers to permit their segregation at cell division. It also contributes to the segregational stability of plasmids. In Azotobacter vinelandii (strain DJ / ATCC BAA-1303), this protein is Tyrosine recombinase XerC.